The sequence spans 164 residues: Endoribonuclease YbeY (164 aa).

Residues H130, H134, and H140 each coordinate Zn(2+).

This sequence belongs to the endoribonuclease YbeY family. Requires Zn(2+) as cofactor.

It localises to the cytoplasm. Functionally, single strand-specific metallo-endoribonuclease involved in late-stage 70S ribosome quality control and in maturation of the 3' terminus of the 16S rRNA. The protein is Endoribonuclease YbeY of Streptococcus mutans serotype c (strain ATCC 700610 / UA159).